Consider the following 234-residue polypeptide: Small ribosomal subunit protein eS4 (234 aa).

Residues 37-99 (VPLLIVLRDV…REEYYRVFPG (63 aa)) enclose the S4 RNA-binding domain.

It belongs to the eukaryotic ribosomal protein eS4 family.

The polypeptide is Small ribosomal subunit protein eS4 (rps4e) (Haloarcula marismortui (strain ATCC 43049 / DSM 3752 / JCM 8966 / VKM B-1809) (Halobacterium marismortui)).